The sequence spans 1093 residues: Isoleucine--tRNA ligase, chloroplastic/mitochondrial (1093 aa).

Positions 69–103 (PNNEFGHSSKRRSRGPVMAAKKASEGEKQEDGKYK) are disordered. The segment covering 90 to 103 (KASEGEKQEDGKYK) has biased composition (basic and acidic residues). The 'HIGH' region motif lies at 155-165 (PYANGDLHMGH). Glu-682 lines the L-isoleucyl-5'-AMP pocket. The short motif at 723–727 (KMSKS) is the 'KMSKS' region element. Lys-726 lines the ATP pocket. Residues Cys-1050, Cys-1053, Cys-1070, and Cys-1073 each coordinate Zn(2+).

This sequence belongs to the class-I aminoacyl-tRNA synthetase family.

It localises to the plastid. The protein localises to the chloroplast. The protein resides in the mitochondrion. The catalysed reaction is tRNA(Ile) + L-isoleucine + ATP = L-isoleucyl-tRNA(Ile) + AMP + diphosphate. The polypeptide is Isoleucine--tRNA ligase, chloroplastic/mitochondrial (Arabidopsis thaliana (Mouse-ear cress)).